The sequence spans 129 residues: LEM domain-containing protein 1 (129 aa).

In terms of domain architecture, LEM spans methionine 1–proline 45. A disordered region spans residues proline 45–alanine 129. A compositionally biased stretch (basic and acidic residues) spans serine 83–alanine 97.

This is LEM domain-containing protein 1 (Lemd1) from Mus musculus (Mouse).